Reading from the N-terminus, the 334-residue chain is Glyceraldehyde-3-phosphate dehydrogenase (334 aa).

NAD(+) contacts are provided by residues 12 to 13 (RI), Asp35, Arg79, and Ser121. D-glyceraldehyde 3-phosphate is bound by residues 152-154 (SCT), Thr183, Arg198, 211-212 (TG), and Arg234. The active-site Nucleophile is the Cys153. Residue Asn315 coordinates NAD(+).

It belongs to the glyceraldehyde-3-phosphate dehydrogenase family. In terms of assembly, homotetramer.

It localises to the cytoplasm. The catalysed reaction is D-glyceraldehyde 3-phosphate + phosphate + NAD(+) = (2R)-3-phospho-glyceroyl phosphate + NADH + H(+). It participates in carbohydrate degradation; glycolysis; pyruvate from D-glyceraldehyde 3-phosphate: step 1/5. Catalyzes the oxidative phosphorylation of glyceraldehyde 3-phosphate (G3P) to 1,3-bisphosphoglycerate (BPG) using the cofactor NAD. The first reaction step involves the formation of a hemiacetal intermediate between G3P and a cysteine residue, and this hemiacetal intermediate is then oxidized to a thioester, with concomitant reduction of NAD to NADH. The reduced NADH is then exchanged with the second NAD, and the thioester is attacked by a nucleophilic inorganic phosphate to produce BPG. This Corynebacterium glutamicum (strain ATCC 13032 / DSM 20300 / JCM 1318 / BCRC 11384 / CCUG 27702 / LMG 3730 / NBRC 12168 / NCIMB 10025 / NRRL B-2784 / 534) protein is Glyceraldehyde-3-phosphate dehydrogenase (gap).